Here is a 175-residue protein sequence, read N- to C-terminus: Large ribosomal subunit protein uL10 (175 aa).

This sequence belongs to the universal ribosomal protein uL10 family. As to quaternary structure, part of the ribosomal stalk of the 50S ribosomal subunit. The N-terminus interacts with L11 and the large rRNA to form the base of the stalk. The C-terminus forms an elongated spine to which L12 dimers bind in a sequential fashion forming a multimeric L10(L12)X complex.

Functionally, forms part of the ribosomal stalk, playing a central role in the interaction of the ribosome with GTP-bound translation factors. This is Large ribosomal subunit protein uL10 from Methylobacterium nodulans (strain LMG 21967 / CNCM I-2342 / ORS 2060).